Here is a 378-residue protein sequence, read N- to C-terminus: Cysteine endopeptidase RepA (378 aa).

The first 24 residues, 1 to 24, serve as a signal peptide directing secretion; that stretch reads MLRCFLVAAAAVALAAAAAAPARA. The propeptide at 25–141 is activation peptide; it reads IPFTESDLSS…SFRYGGDDED (117 aa). Disulfide bonds link C164-C206, C198-C239, and C297-C350. C167 is an active-site residue. Active-site residues include H303 and N324.

Belongs to the peptidase C1 family.

It localises to the protein storage vacuole. Its function is as follows. Cysteine endopeptidase that digests in vitro both the acidic and basic subunits of glutelin, the major seed storage protein of rice. The chain is Cysteine endopeptidase RepA from Oryza sativa subsp. japonica (Rice).